The primary structure comprises 550 residues: CTP synthase (550 aa).

The tract at residues 1–272 is amidoligase domain; that stretch reads MKTKFIFITG…DQKITSFLNL (272 aa). Residue serine 14 coordinates CTP. A UTP-binding site is contributed by serine 14. 15–20 contacts ATP; it reads SLGKGL. Tyrosine 55 provides a ligand contact to L-glutamine. Aspartate 72 is a binding site for ATP. Mg(2+) is bound by residues aspartate 72 and glutamate 146. CTP is bound by residues 153–155, 193–198, and lysine 229; these read DIE and KTKPTQ. UTP-binding positions include 193-198 and lysine 229; that span reads KTKPTQ. The 254-residue stretch at 297–550 folds into the Glutamine amidotransferase type-1 domain; that stretch reads TITIVGKYVG…IHAACNHNKQ (254 aa). Residue glycine 359 coordinates L-glutamine. Cysteine 386 acts as the Nucleophile; for glutamine hydrolysis in catalysis. Residues 387-390, glutamate 410, and arginine 478 each bind L-glutamine; that span reads LGMQ. Residues histidine 523 and glutamate 525 contribute to the active site.

This sequence belongs to the CTP synthase family. Homotetramer.

The enzyme catalyses UTP + L-glutamine + ATP + H2O = CTP + L-glutamate + ADP + phosphate + 2 H(+). It catalyses the reaction L-glutamine + H2O = L-glutamate + NH4(+). It carries out the reaction UTP + NH4(+) + ATP = CTP + ADP + phosphate + 2 H(+). It participates in pyrimidine metabolism; CTP biosynthesis via de novo pathway; CTP from UDP: step 2/2. With respect to regulation, allosterically activated by GTP, when glutamine is the substrate; GTP has no effect on the reaction when ammonia is the substrate. The allosteric effector GTP functions by stabilizing the protein conformation that binds the tetrahedral intermediate(s) formed during glutamine hydrolysis. Inhibited by the product CTP, via allosteric rather than competitive inhibition. In terms of biological role, catalyzes the ATP-dependent amination of UTP to CTP with either L-glutamine or ammonia as the source of nitrogen. Regulates intracellular CTP levels through interactions with the four ribonucleotide triphosphates. The chain is CTP synthase from Lawsonia intracellularis (strain PHE/MN1-00).